The primary structure comprises 239 residues: Ribosomal RNA small subunit methyltransferase G (239 aa).

S-adenosyl-L-methionine is bound by residues glycine 79, phenylalanine 84, 130 to 131 (AE), and arginine 149.

This sequence belongs to the methyltransferase superfamily. RNA methyltransferase RsmG family.

The protein localises to the cytoplasm. Specifically methylates the N7 position of a guanine in 16S rRNA. In Lactobacillus johnsonii (strain CNCM I-12250 / La1 / NCC 533), this protein is Ribosomal RNA small subunit methyltransferase G.